A 323-amino-acid chain; its full sequence is Homocysteine S-methyltransferase 1 (323 aa).

The region spanning 3 to 317 (VLEDLVARAG…STIRAVSKIL (315 aa)) is the Hcy-binding domain. Cys235, Cys302, and Cys303 together coordinate Zn(2+).

In terms of assembly, monomer. Zn(2+) serves as cofactor.

It carries out the reaction S-methyl-L-methionine + L-homocysteine = 2 L-methionine + H(+). Catalyzes methyl transfer from S-methylmethionine (SMM) to adenosyl-L-homocysteine (AdoMet). SMM degradation (by HMT-1, HMT-2, HMT-3 and HMT-4) and biosynthesis (by MMT1) constitute the SMM cycle in plants, which is probably required to achieve short term control of AdoMet level. This is Homocysteine S-methyltransferase 1 (HMT-1) from Zea mays (Maize).